The primary structure comprises 445 residues: C4-dicarboxylate transport protein (445 aa).

8 consecutive transmembrane segments (helical) span residues 24–44 (VLYV…WVSP), 62–82 (LIKM…IAHI), 105–125 (FALI…GLAA), 163–183 (GDIL…MALG), 201–221 (FGVI…AMAF), 237–257 (LVAL…GLIA), 322–342 (IYMT…LTFT), and 370–390 (AGTL…VFSI).

Belongs to the dicarboxylate/amino acid:cation symporter (DAACS) (TC 2.A.23) family.

The protein localises to the cell inner membrane. Responsible for the transport of dicarboxylates such as succinate, fumarate, and malate from the periplasm across the membrane. This is C4-dicarboxylate transport protein from Rhodopseudomonas palustris (strain BisB5).